The following is a 113-amino-acid chain: UPF0342 protein SMU_782 (113 aa).

It belongs to the UPF0342 family.

In Streptococcus mutans serotype c (strain ATCC 700610 / UA159), this protein is UPF0342 protein SMU_782.